Consider the following 1294-residue polypeptide: ATPase PglY (1294 aa).

The interval 1205–1263 is disordered; that stretch reads TQAAATPPPAPAASQPTAGDLSLDTPTSDPRIPYTSQETPTSSGGAGTARTSGGRRTTA. The segment covering 1228-1244 has biased composition (polar residues); sequence DTPTSDPRIPYTSQETP. Low complexity predominate over residues 1252 to 1263; the sequence is TARTSGGRRTTA.

Functionally, BREX systems (bacteriophage exclusion) provide immunity against bacteriophage. Part of a type 2 BREX system. Previously called the phage growth limitation (Pgl) system, it confers protection against bacteriophage phiC31. The bacteria allows one cycle of phage infection, but subsequent cycles are impaired, protecting the original bacterial colony. The system undergoes high rates (10(-3) to 10(-4)) of phase reversion, i.e. loss and regain of phiC31 resistance. When the pglW-pglX-pglY-pglZ genes are transformed into a susceptible S.lividans (strain 1326) they confer resistance to infection by phage phiC31 and phiBT1; all 4 genes are necessary. In terms of biological role, hydrolyzes ATP but not AMP, ADP, GMP, GDP or GTP; activity is inhibited by the non-hydrolyzable ATP analog 5-adenylyl beta,gamma-imidodiphosphate. This is ATPase PglY from Streptomyces coelicolor (strain ATCC BAA-471 / A3(2) / M145).